The primary structure comprises 265 residues: Protein Pars_0096 (265 aa).

The protein belongs to the CinA family.

The sequence is that of Protein Pars_0096 from Pyrobaculum arsenaticum (strain DSM 13514 / JCM 11321 / PZ6).